Here is a 178-residue protein sequence, read N- to C-terminus: ATP synthase subunit delta (178 aa).

Belongs to the ATPase delta chain family. F-type ATPases have 2 components, F(1) - the catalytic core - and F(0) - the membrane proton channel. F(1) has five subunits: alpha(3), beta(3), gamma(1), delta(1), epsilon(1). F(0) has three main subunits: a(1), b(2) and c(10-14). The alpha and beta chains form an alternating ring which encloses part of the gamma chain. F(1) is attached to F(0) by a central stalk formed by the gamma and epsilon chains, while a peripheral stalk is formed by the delta and b chains.

The protein resides in the cell membrane. In terms of biological role, f(1)F(0) ATP synthase produces ATP from ADP in the presence of a proton or sodium gradient. F-type ATPases consist of two structural domains, F(1) containing the extramembraneous catalytic core and F(0) containing the membrane proton channel, linked together by a central stalk and a peripheral stalk. During catalysis, ATP synthesis in the catalytic domain of F(1) is coupled via a rotary mechanism of the central stalk subunits to proton translocation. This protein is part of the stalk that links CF(0) to CF(1). It either transmits conformational changes from CF(0) to CF(1) or is implicated in proton conduction. The polypeptide is ATP synthase subunit delta (Lysinibacillus sphaericus (strain C3-41)).